An 81-amino-acid polypeptide reads, in one-letter code: Translational regulator CsrA (81 aa).

It belongs to the CsrA/RsmA family. Homodimer; the beta-strands of each monomer intercalate to form a hydrophobic core, while the alpha-helices form wings that extend away from the core.

The protein localises to the cytoplasm. Its function is as follows. A translational regulator that binds mRNA to regulate translation initiation and/or mRNA stability. Usually binds in the 5'-UTR at or near the Shine-Dalgarno sequence preventing ribosome-binding, thus repressing translation. Its main target seems to be the major flagellin gene, while its function is anatagonized by FliW. The sequence is that of Translational regulator CsrA from Desulforapulum autotrophicum (strain ATCC 43914 / DSM 3382 / VKM B-1955 / HRM2) (Desulfobacterium autotrophicum).